Here is a 208-residue protein sequence, read N- to C-terminus: Small ribosomal subunit protein uS4 (208 aa).

The S4 RNA-binding domain maps to 98 to 164 (TRLDNVVYRL…PKVKSIREIA (67 aa)).

This sequence belongs to the universal ribosomal protein uS4 family. Part of the 30S ribosomal subunit. Contacts protein S5. The interaction surface between S4 and S5 is involved in control of translational fidelity.

Functionally, one of the primary rRNA binding proteins, it binds directly to 16S rRNA where it nucleates assembly of the body of the 30S subunit. Its function is as follows. With S5 and S12 plays an important role in translational accuracy. In Ruminiclostridium cellulolyticum (strain ATCC 35319 / DSM 5812 / JCM 6584 / H10) (Clostridium cellulolyticum), this protein is Small ribosomal subunit protein uS4.